We begin with the raw amino-acid sequence, 318 residues long: Myoblast determination protein 1 (318 aa).

M1 participates in a covalent cross-link: Peptide (Met-Gly) (interchain with G-Cter in ubiquitin). K104 carries the N6-methyllysine; by EHMT2 modification. Positions 109–160 constitute a bHLH domain; that stretch reads DRRKAATMRERRRLSKVNEAFETLKRCTSSNPNQRLPKVEILRNAIRYIEGL. 2 disordered regions span residues 175 to 224 and 262 to 318; these read AAFY…RQNG and SPAA…YQVL. Over residues 196 to 206 the composition is skewed to polar residues; sequence SDASSPRSNCS. Positions 262–271 are enriched in low complexity; sequence SPAAPSLLLP. Pro residues predominate over residues 272–282; that stretch reads DAPPESPPGPP. The segment covering 290–304 has biased composition (polar residues); that stretch reads AEQGTQTPSPDSTPQ.

As to quaternary structure, efficient DNA binding requires dimerization with another bHLH protein. Seems to form active heterodimers with ITF-2. Interacts with SUV39H1. Interacts with DDX5. Interacts with CHD2. Interacts with TSC22D3. Interacts with SETD3. Interacts with P-TEFB complex; promotes the transcriptional activity of MYOD1 through its CDK9-mediated phosphorylation. Interacts with CSRP3. Interacts with NUPR1. Phosphorylated by CDK9. This phosphorylation promotes its function in muscle differentiation. In terms of processing, acetylated by a complex containing EP300 and PCAF. The acetylation is essential to activate target genes. Conversely, its deacetylation by SIRT1 inhibits its function. Post-translationally, ubiquitinated on the N-terminus; which is required for proteasomal degradation. Methylation at Lys-104 by EHMT2/G9a inhibits myogenic activity.

It is found in the nucleus. Functionally, acts as a transcriptional activator that promotes transcription of muscle-specific target genes and plays a role in muscle differentiation. Together with MYF5 and MYOG, co-occupies muscle-specific gene promoter core region during myogenesis. Induces fibroblasts to differentiate into myoblasts. Interacts with and is inhibited by the twist protein. This interaction probably involves the basic domains of both proteins. In Rattus norvegicus (Rat), this protein is Myoblast determination protein 1 (Myod1).